The chain runs to 192 residues: Interleukin-18 (192 aa).

The propeptide occupies 1–35 (MAAEPEDNCISFVEMKFINNTLYFVAENDEDLESD).

The protein belongs to the IL-1 family. As to quaternary structure, forms a ternary complex with ligand-binding receptor subunit IL18R1 and signaling receptor subunit IL18RAP at the plasma membrane. Mature IL18 first binds to IL18R1 forming a low affinity binary complex, which then interacts with IL18RAP to form a high affinity ternary complex that signals inside the cell. Interacts with cargo receptor TMED10; the interaction mediates the translocation from the cytoplasm into the ERGIC (endoplasmic reticulum-Golgi intermediate compartment) and thereby secretion. Post-translationally, the pro-IL-18 precursor is processed by CASP1, CASP4 or CASP5 to yield its mature, active form. The pro-IL-18 precursor features autoinhibitory interactions between the propeptide and the post-cleavage-site region, preventing recognition by the IL18R1 receptor. Processing by CASP1, CASP4 or CASP5 induces conformational changes to generate critical receptor-binding sites. The mature form is then secreted and released in the extracellular milieu by passing through the gasdermin-D (GSDMD) pore. In contrast, cleavage by CASP3 inactivates IL18.

Its subcellular location is the cytoplasm. It is found in the cytosol. It localises to the secreted. In terms of biological role, pro-inflammatory cytokine primarily involved in epithelial barrier repair, polarized T-helper 1 (Th1) cell and natural killer (NK) cell immune responses. Upon binding to IL18R1 and IL18RAP, forms a signaling ternary complex which activates NF-kappa-B, triggering synthesis of inflammatory mediators. Synergizes with IL12/interleukin-12 to induce IFNG synthesis from T-helper 1 (Th1) cells and natural killer (NK) cells. Involved in transduction of inflammation downstream of pyroptosis: its mature form is specifically released in the extracellular milieu by passing through the gasdermin-D (GSDMD) pore. The polypeptide is Interleukin-18 (IL18) (Sus scrofa (Pig)).